The chain runs to 182 residues: Ribosome-recycling factor (182 aa).

The tract at residues 137-158 is disordered; sequence KKSEKESEISEDQSRDEQDNVQ.

Belongs to the RRF family.

The protein resides in the cytoplasm. Functionally, responsible for the release of ribosomes from messenger RNA at the termination of protein biosynthesis. May increase the efficiency of translation by recycling ribosomes from one round of translation to another. The protein is Ribosome-recycling factor of Prochlorococcus marinus (strain MIT 9211).